We begin with the raw amino-acid sequence, 65 residues long: Antitoxin VapB32 (65 aa).

Positions 46-65 (ALGGTDPQATAAPRRRTSPR) are disordered.

Functionally, antitoxin component of a type II toxin-antitoxin (TA) system. This is Antitoxin VapB32 (vapB32) from Mycobacterium tuberculosis (strain CDC 1551 / Oshkosh).